A 332-amino-acid chain; its full sequence is Ephrin-B2a (332 aa).

A signal peptide spans 1 to 24 (MGDSLWRYYFGVLVIACKVNLSRA). N-linked (GlcNAc...) asparagine glycosylation is found at N20 and N33. Residues 25-161 (LILDSIYWNT…TKSMKIIMKV (137 aa)) enclose the Ephrin RBD domain. The Extracellular portion of the chain corresponds to 25–225 (LILDSIYWNT…VIGSEVALFA (201 aa)). 2 cysteine pairs are disulfide-bonded: C59–C98 and C86–C150. N-linked (GlcNAc...) asparagine glycosylation occurs at N136. A disordered region spans residues 162–212 (GQNPSDPISPKDYPTSYPPKHPDLGGKDSKSNEVLKPDASPHGEDKGDGNK). Basic and acidic residues predominate over residues 181–210 (KHPDLGGKDSKSNEVLKPDASPHGEDKGDG). N211 is a glycosylation site (N-linked (GlcNAc...) asparagine). The chain crosses the membrane as a helical span at residues 226 to 246 (CIASASVIVIIIIIMLVFLLL). Residues 247–332 (KYRRRHRKHS…QSPANIYYKV (86 aa)) lie on the Cytoplasmic side of the membrane. Residues 255–285 (HSPQHATTLSLSTLATPKRGGSGGNNNGSEP) form a disordered region. The segment covering 260–270 (ATTLSLSTLAT) has biased composition (low complexity). Residues 330 to 332 (YKV) carry the PDZ-binding motif.

The protein belongs to the ephrin family. Binds to the receptor tyrosine kinase ephb4. Inducible phosphorylation of tyrosine residues in the cytoplasmic domain.

It localises to the cell membrane. Functionally, cell surface transmembrane ligand for Eph receptors, a family of receptor tyrosine kinases which are crucial for migration, repulsion and adhesion during neuronal, vascular and epithelial development. Binds promiscuously Eph receptors residing on adjacent cells, leading to contact-dependent bidirectional signaling into neighboring cells. The signaling pathway downstream of the receptor is referred to as forward signaling while the signaling pathway downstream of the ephrin ligand is referred to as reverse signaling. Together with ephb4 may play a central role in heart morphogenesis and angiogenesis through regulation of cell adhesion and cell migration. The sequence is that of Ephrin-B2a (efnb2a) from Danio rerio (Zebrafish).